Consider the following 412-residue polypeptide: 1-deoxy-D-xylulose 5-phosphate reductoisomerase (412 aa).

NADPH contacts are provided by threonine 5, glycine 6, serine 7, isoleucine 8, glycine 31, arginine 32, asparagine 33, and asparagine 125. Lysine 126 serves as a coordination point for 1-deoxy-D-xylulose 5-phosphate. Glutamate 127 lines the NADPH pocket. Aspartate 151 serves as a coordination point for Mn(2+). 1-deoxy-D-xylulose 5-phosphate-binding residues include serine 152, glutamate 153, serine 189, and histidine 212. Residue glutamate 153 participates in Mn(2+) binding. NADPH is bound at residue glycine 218. 1-deoxy-D-xylulose 5-phosphate contacts are provided by serine 225, asparagine 230, lysine 231, and glutamate 234. Glutamate 234 lines the Mn(2+) pocket.

This sequence belongs to the DXR family. It depends on Mg(2+) as a cofactor. Mn(2+) is required as a cofactor.

The enzyme catalyses 2-C-methyl-D-erythritol 4-phosphate + NADP(+) = 1-deoxy-D-xylulose 5-phosphate + NADPH + H(+). The protein operates within isoprenoid biosynthesis; isopentenyl diphosphate biosynthesis via DXP pathway; isopentenyl diphosphate from 1-deoxy-D-xylulose 5-phosphate: step 1/6. Its function is as follows. Catalyzes the NADPH-dependent rearrangement and reduction of 1-deoxy-D-xylulose-5-phosphate (DXP) to 2-C-methyl-D-erythritol 4-phosphate (MEP). This chain is 1-deoxy-D-xylulose 5-phosphate reductoisomerase, found in Prochlorococcus marinus (strain SARG / CCMP1375 / SS120).